A 415-amino-acid polypeptide reads, in one-letter code: Serine hydroxymethyltransferase (415 aa).

(6S)-5,6,7,8-tetrahydrofolate contacts are provided by residues Leu-119 and 123-125 (GHL). N6-(pyridoxal phosphate)lysine is present on Lys-228.

It belongs to the SHMT family. As to quaternary structure, homodimer. The cofactor is pyridoxal 5'-phosphate.

The protein localises to the cytoplasm. The enzyme catalyses (6R)-5,10-methylene-5,6,7,8-tetrahydrofolate + glycine + H2O = (6S)-5,6,7,8-tetrahydrofolate + L-serine. It participates in one-carbon metabolism; tetrahydrofolate interconversion. The protein operates within amino-acid biosynthesis; glycine biosynthesis; glycine from L-serine: step 1/1. In terms of biological role, catalyzes the reversible interconversion of serine and glycine with tetrahydrofolate (THF) serving as the one-carbon carrier. This reaction serves as the major source of one-carbon groups required for the biosynthesis of purines, thymidylate, methionine, and other important biomolecules. Also exhibits THF-independent aldolase activity toward beta-hydroxyamino acids, producing glycine and aldehydes, via a retro-aldol mechanism. This Coprothermobacter proteolyticus (strain ATCC 35245 / DSM 5265 / OCM 4 / BT) protein is Serine hydroxymethyltransferase.